The chain runs to 1501 residues: Inactive protein tyrosine kinase pTKL (1501 aa).

Asn64, Asn128, and Asn133 each carry an N-linked (GlcNAc...) asparagine glycan. Over residues 204–221 the composition is skewed to basic residues; the sequence is KKNKKNKKNKKKKNKKTK. A disordered region spans residues 204–223; it reads KKNKKNKKNKKKKNKKTKNT. N-linked (GlcNAc...) asparagine glycosylation is found at Asn239, Asn242, Asn258, and Asn327. A compositionally biased stretch (basic and acidic residues) spans 257-273; sequence MNISLHEKNDKKNEKKN. The segment at 257-276 is disordered; sequence MNISLHEKNDKKNEKKNEKK. The region spanning 301-366 is the SAM domain; the sequence is WSLREVIQWL…LQLIKNLQVM (66 aa). The tract at residues 392–425 is disordered; the sequence is NKNIKKGKNIKKEKKKKKEKNIKKEKKKKKKETK. Residues 394–424 show a composition bias toward basic residues; it reads NIKKGKNIKKEKKKKKEKNIKKEKKKKKKET. Residues 399–433 are a coiled coil; the sequence is KNIKKEKKKKKEKNIKKEKKKKKKETKKFNNMDKK. 3 N-linked (GlcNAc...) asparagine glycosylation sites follow: Asn448, Asn463, and Asn471. Residues 483 to 486 carry the RVxF motif 1 motif; that stretch reads KVSF. An N-linked (GlcNAc...) asparagine glycan is attached at Asn506. The span at 543 to 597 shows a compositional bias: low complexity; it reads QLSSPLSSPLSSPSPSSSPSSSPSSSPSSSPSSSPSPSSSPSPSSSPSSSPSSSP. Positions 543–607 are disordered; it reads QLSSPLSSPL…SSPPSPLSYK (65 aa). Residue Asn652 is glycosylated (N-linked (GlcNAc...) asparagine). The tract at residues 659–678 is disordered; that stretch reads IKKSKSKYNNDKKEQKKLPL. The span at 666–675 shows a compositional bias: basic and acidic residues; sequence YNNDKKEQKK. Residues Asn681, Asn712, Asn737, Asn811, and Asn819 are each glycosylated (N-linked (GlcNAc...) asparagine). ATP-binding positions include 836–844 and Lys864; that span reads QNINNFGKY. N-linked (GlcNAc...) asparagine glycans are attached at residues Asn1024, Asn1031, Asn1074, and Asn1157. The 396-residue stretch at 1088-1483 folds into the Protein kinase domain; that stretch reads FHYQHNVLCG…HILKTISTLY (396 aa). The RVxF motif 2 motif lies at 1238 to 1241; it reads KVLF. A glycan (N-linked (GlcNAc...) asparagine) is linked at Asn1382.

Belongs to the protein kinase superfamily. TKL Ser/Thr protein kinase family. In terms of assembly, interacts (via RVxF motif 1 and/or 2) with phosphatase PP1C. May interact (via SAM domain) with SERA5 (via C-terminus).

It is found in the parasitophorous vacuole. The protein resides in the host cell membrane. Its subcellular location is the host cytoplasm. The protein localises to the host cytoskeleton. The protein is Inactive protein tyrosine kinase pTKL of Plasmodium falciparum (isolate 3D7).